A 593-amino-acid polypeptide reads, in one-letter code: Arginine--tRNA ligase (593 aa).

The 'HIGH' region signature appears at 138-148 (ANPTGPLHVGH).

Belongs to the class-I aminoacyl-tRNA synthetase family. As to quaternary structure, monomer.

Its subcellular location is the cytoplasm. It carries out the reaction tRNA(Arg) + L-arginine + ATP = L-arginyl-tRNA(Arg) + AMP + diphosphate. The protein is Arginine--tRNA ligase of Burkholderia ambifaria (strain ATCC BAA-244 / DSM 16087 / CCUG 44356 / LMG 19182 / AMMD) (Burkholderia cepacia (strain AMMD)).